The chain runs to 229 residues: Aquaporin Z (229 aa).

2 consecutive transmembrane segments (helical) span residues 8-28 (FFGTFWLVLGGCGSAVLAAGV) and 33-53 (IGYLGVALAFGLSVLTMAYAI). The NPA 1 signature appears at 62–64 (NPA). The next 3 membrane-spanning stretches (helical) occupy residues 81–101 (LPYVVAQVLGGLAAGGVLYLI), 131–151 (AALVSEVVLTGMFLLIILGAT), and 158–178 (GFAPIAIGLTLTLIHLISIPV). An NPA 2 motif is present at residues 184 to 186 (NPA). The chain crosses the membrane as a helical span at residues 199 to 219 (AVSQLWLFWVAPILGAVLGAL).

Belongs to the MIP/aquaporin (TC 1.A.8) family. In terms of assembly, homotetramer.

It is found in the cell inner membrane. The enzyme catalyses H2O(in) = H2O(out). Its function is as follows. Channel that permits osmotically driven movement of water in both directions. It is involved in the osmoregulation and in the maintenance of cell turgor during volume expansion in rapidly growing cells. It mediates rapid entry or exit of water in response to abrupt changes in osmolarity. This chain is Aquaporin Z, found in Pseudomonas aeruginosa (strain ATCC 15692 / DSM 22644 / CIP 104116 / JCM 14847 / LMG 12228 / 1C / PRS 101 / PAO1).